The following is a 299-amino-acid chain: Phosphatidylcholine-sterol acyltransferase (299 aa).

2 N-linked (GlcNAc...) asparagine glycosylation sites follow: asparagine 28 and asparagine 184. A disulfide bond links cysteine 225 and cysteine 268. Aspartate 257 functions as the Charge relay system in the catalytic mechanism. Asparagine 285 carries an N-linked (GlcNAc...) asparagine glycan. Histidine 289 acts as the Charge relay system in catalysis. The N-linked (GlcNAc...) asparagine glycan is linked to asparagine 296.

The protein belongs to the AB hydrolase superfamily. Lipase family.

It localises to the secreted. It carries out the reaction a sterol + a 1,2-diacyl-sn-glycero-3-phosphocholine = a sterol ester + a 1-acyl-sn-glycero-3-phosphocholine. APOA1 is the most potent activator in plasma. Also activated by APOE, APOC1 and APOA4. Central enzyme in the extracellular metabolism of plasma lipoproteins. Synthesized mainly in the liver and secreted into plasma where it converts cholesterol and phosphatidylcholines (lecithins) to cholesteryl esters and lysophosphatidylcholines on the surface of high and low density lipoproteins (HDLs and LDLs). The cholesterol ester is then transported back to the liver. Has a preference for plasma 16:0-18:2 or 18:O-18:2 phosphatidylcholines. Also produced in the brain by primary astrocytes, and esterifies free cholesterol on nascent APOE-containing lipoproteins secreted from glia and influences cerebral spinal fluid (CSF) APOE- and APOA1 levels. Together with APOE and the cholesterol transporter ABCA1, plays a key role in the maturation of glial-derived, nascent lipoproteins. Required for remodeling high-density lipoprotein particles into their spherical forms. In Micromys minutus (European harvest mouse), this protein is Phosphatidylcholine-sterol acyltransferase (LCAT).